A 198-amino-acid chain; its full sequence is Recombination protein RecR (198 aa).

The C4-type zinc finger occupies 58 to 73; that stretch reads CKVCQTLTDKEICPIC. One can recognise a Toprim domain in the interval 81-175; sequence KVIMVVENTR…KVSRIASGVP (95 aa).

Belongs to the RecR family.

Its function is as follows. May play a role in DNA repair. It seems to be involved in an RecBC-independent recombinational process of DNA repair. It may act with RecF and RecO. This chain is Recombination protein RecR, found in Lachnoclostridium phytofermentans (strain ATCC 700394 / DSM 18823 / ISDg) (Clostridium phytofermentans).